A 137-amino-acid chain; its full sequence is Ribosome-binding factor A (137 aa).

Belongs to the RbfA family. Monomer. Binds 30S ribosomal subunits, but not 50S ribosomal subunits or 70S ribosomes.

It localises to the cytoplasm. Functionally, one of several proteins that assist in the late maturation steps of the functional core of the 30S ribosomal subunit. Associates with free 30S ribosomal subunits (but not with 30S subunits that are part of 70S ribosomes or polysomes). Required for efficient processing of 16S rRNA. May interact with the 5'-terminal helix region of 16S rRNA. The protein is Ribosome-binding factor A of Erwinia tasmaniensis (strain DSM 17950 / CFBP 7177 / CIP 109463 / NCPPB 4357 / Et1/99).